A 234-amino-acid polypeptide reads, in one-letter code: 7-cyano-7-deazaguanine synthase (234 aa).

8-18 (FSGGQDSTTCA) contacts ATP. The Zn(2+) site is built by cysteine 194, cysteine 202, cysteine 205, and cysteine 208.

Belongs to the QueC family. Requires Zn(2+) as cofactor.

The catalysed reaction is 7-carboxy-7-deazaguanine + NH4(+) + ATP = 7-cyano-7-deazaguanine + ADP + phosphate + H2O + H(+). It functions in the pathway purine metabolism; 7-cyano-7-deazaguanine biosynthesis. In terms of biological role, catalyzes the ATP-dependent conversion of 7-carboxy-7-deazaguanine (CDG) to 7-cyano-7-deazaguanine (preQ(0)). This is 7-cyano-7-deazaguanine synthase from Gloeobacter violaceus (strain ATCC 29082 / PCC 7421).